Here is a 326-residue protein sequence, read N- to C-terminus: Lipoyl synthase (326 aa).

[4Fe-4S] cluster-binding residues include Cys-74, Cys-79, Cys-85, Cys-100, Cys-104, Cys-107, and Ser-314. The Radical SAM core domain maps to 85–303 (CFGRGTATFM…EEEAYKMGFS (219 aa)).

It belongs to the radical SAM superfamily. Lipoyl synthase family. Requires [4Fe-4S] cluster as cofactor.

It is found in the cytoplasm. The catalysed reaction is [[Fe-S] cluster scaffold protein carrying a second [4Fe-4S](2+) cluster] + N(6)-octanoyl-L-lysyl-[protein] + 2 oxidized [2Fe-2S]-[ferredoxin] + 2 S-adenosyl-L-methionine + 4 H(+) = [[Fe-S] cluster scaffold protein] + N(6)-[(R)-dihydrolipoyl]-L-lysyl-[protein] + 4 Fe(3+) + 2 hydrogen sulfide + 2 5'-deoxyadenosine + 2 L-methionine + 2 reduced [2Fe-2S]-[ferredoxin]. Its pathway is protein modification; protein lipoylation via endogenous pathway; protein N(6)-(lipoyl)lysine from octanoyl-[acyl-carrier-protein]: step 2/2. Catalyzes the radical-mediated insertion of two sulfur atoms into the C-6 and C-8 positions of the octanoyl moiety bound to the lipoyl domains of lipoate-dependent enzymes, thereby converting the octanoylated domains into lipoylated derivatives. The protein is Lipoyl synthase of Acidovorax ebreus (strain TPSY) (Diaphorobacter sp. (strain TPSY)).